The sequence spans 55 residues: ATP synthase F(0) complex subunit 8 (55 aa).

The chain crosses the membrane as a helical span at residues 7–24; the sequence is APWFSIMIMTWLTLALLI. The interval 34–55 is disordered; that stretch reads TNPPSSKPSLTTKPTPWAWPWT.

It belongs to the ATPase protein 8 family. As to quaternary structure, component of the ATP synthase complex composed at least of ATP5F1A/subunit alpha, ATP5F1B/subunit beta, ATP5MC1/subunit c (homooctomer), MT-ATP6/subunit a, MT-ATP8/subunit 8, ATP5ME/subunit e, ATP5MF/subunit f, ATP5MG/subunit g, ATP5MK/subunit k, ATP5MJ/subunit j, ATP5F1C/subunit gamma, ATP5F1D/subunit delta, ATP5F1E/subunit epsilon, ATP5PF/subunit F6, ATP5PB/subunit b, ATP5PD/subunit d, ATP5PO/subunit OSCP. ATP synthase complex consists of a soluble F(1) head domain (subunits alpha(3) and beta(3)) - the catalytic core - and a membrane F(0) domain - the membrane proton channel (subunits c, a, 8, e, f, g, k and j). These two domains are linked by a central stalk (subunits gamma, delta, and epsilon) rotating inside the F1 region and a stationary peripheral stalk (subunits F6, b, d, and OSCP).

It localises to the mitochondrion membrane. Its function is as follows. Subunit 8, of the mitochondrial membrane ATP synthase complex (F(1)F(0) ATP synthase or Complex V) that produces ATP from ADP in the presence of a proton gradient across the membrane which is generated by electron transport complexes of the respiratory chain. ATP synthase complex consist of a soluble F(1) head domain - the catalytic core - and a membrane F(1) domain - the membrane proton channel. These two domains are linked by a central stalk rotating inside the F(1) region and a stationary peripheral stalk. During catalysis, ATP synthesis in the catalytic domain of F(1) is coupled via a rotary mechanism of the central stalk subunits to proton translocation. In vivo, can only synthesize ATP although its ATP hydrolase activity can be activated artificially in vitro. Part of the complex F(0) domain. This is ATP synthase F(0) complex subunit 8 from Aythya americana (Redhead).